The following is a 596-amino-acid chain: Elongation factor 4 (596 aa).

Residues 2-184 enclose the tr-type G domain; the sequence is KQIRNFSIIA…VIVAKIPPPE (183 aa). Residues 14 to 19 and 131 to 134 each bind GTP; these read DHGKST and NKID.

It belongs to the TRAFAC class translation factor GTPase superfamily. Classic translation factor GTPase family. LepA subfamily.

It is found in the cell inner membrane. It catalyses the reaction GTP + H2O = GDP + phosphate + H(+). Required for accurate and efficient protein synthesis under certain stress conditions. May act as a fidelity factor of the translation reaction, by catalyzing a one-codon backward translocation of tRNAs on improperly translocated ribosomes. Back-translocation proceeds from a post-translocation (POST) complex to a pre-translocation (PRE) complex, thus giving elongation factor G a second chance to translocate the tRNAs correctly. Binds to ribosomes in a GTP-dependent manner. The chain is Elongation factor 4 from Shewanella baltica (strain OS223).